Here is a 494-residue protein sequence, read N- to C-terminus: NADH-quinone oxidoreductase subunit N (494 aa).

14 helical membrane-spanning segments follow: residues Val-9–Leu-29, Leu-36–Phe-56, Pro-73–Ser-93, Leu-107–Ser-127, Phe-131–Phe-151, Phe-166–Ala-186, Leu-209–Phe-229, Pro-241–Ile-261, Met-278–Thr-298, Leu-304–Val-324, Met-339–Leu-359, Phe-382–Phe-402, Gly-416–Leu-436, and Ala-469–Ile-489.

Belongs to the complex I subunit 2 family. As to quaternary structure, NDH-1 is composed of 14 different subunits. Subunits NuoA, H, J, K, L, M, N constitute the membrane sector of the complex.

It is found in the cell inner membrane. The enzyme catalyses a quinone + NADH + 5 H(+)(in) = a quinol + NAD(+) + 4 H(+)(out). NDH-1 shuttles electrons from NADH, via FMN and iron-sulfur (Fe-S) centers, to quinones in the respiratory chain. The immediate electron acceptor for the enzyme in this species is believed to be ubiquinone. Couples the redox reaction to proton translocation (for every two electrons transferred, four hydrogen ions are translocated across the cytoplasmic membrane), and thus conserves the redox energy in a proton gradient. The sequence is that of NADH-quinone oxidoreductase subunit N from Herminiimonas arsenicoxydans.